The chain runs to 595 residues: Fructan 1-exohydrolase (595 aa).

The N-terminal stretch at 1-20 (MAQAWAFLLPLLVLGSYVTS) is a signal peptide. D74 is an active-site residue. N167, N235, and N247 each carry an N-linked (GlcNAc...) asparagine glycan. Residues C445 and C491 are joined by a disulfide bond. N-linked (GlcNAc...) asparagine glycosylation occurs at N566.

This sequence belongs to the glycosyl hydrolase 32 family.

It carries out the reaction Hydrolysis of terminal, non-reducing (2-&gt;1)-linked beta-D-fructofuranose residues in fructans.. Inhibited by sucrose. Its function is as follows. Hydrolyzes inulin-type beta-(2,1)-fructans. May play a role as a beta-(2,1)-trimmer during graminan biosynthesis. The polypeptide is Fructan 1-exohydrolase (Aegilops speltoides (Goatgrass)).